The chain runs to 230 residues: Cysteine S-methyltransferase OspZ (230 aa).

An interaction with host proteins TAB2, TAB3 and ZRANB3 region spans residues 49–52; sequence GITR. Residues A92, S98, R107, Q111, Y204, and E208 each contribute to the S-adenosyl-L-methionine site.

Belongs to the NleE/OspZ family. In terms of assembly, monomer.

It localises to the secreted. The protein localises to the host cytoplasm. It is found in the host nucleus. It carries out the reaction L-cysteinyl-[protein] + S-adenosyl-L-methionine = S-methyl-L-cysteinyl-[protein] + S-adenosyl-L-homocysteine + H(+). Functionally, cysteine methyltransferase effector that inhibits host cell NF-kappa-B activation by preventing nuclear translocation of host protein RELA/p65. Acts by mediating cysteine methylation of host proteins TAB2 and TAB3: methylation of a conserved cysteine residue of the RanBP2-type zinc finger (NZF) of TAB2 and TAB3 disrupts zinc-binding, thereby inactivating the ubiquitin chain-binding activity of TAB2 and TAB3, leading to NF-kappa-B inactivation. Also mediates cysteine methylation of host protein ZRANB3, inactivating its ability to bind ubiquitin chains. The chain is Cysteine S-methyltransferase OspZ from Shigella flexneri.